A 522-amino-acid chain; its full sequence is Protein nucleotidyltransferase YdiU (522 aa).

Residues Gly-109, Gly-111, Arg-112, Lys-132, Asp-144, Gly-145, Arg-195, and Arg-202 each contribute to the ATP site. Residue Asp-271 is the Proton acceptor of the active site. Mg(2+) is bound by residues Asn-272 and Asp-281. ATP is bound at residue Asp-281.

The protein belongs to the SELO family. It depends on Mg(2+) as a cofactor. Requires Mn(2+) as cofactor.

It catalyses the reaction L-seryl-[protein] + ATP = 3-O-(5'-adenylyl)-L-seryl-[protein] + diphosphate. It carries out the reaction L-threonyl-[protein] + ATP = 3-O-(5'-adenylyl)-L-threonyl-[protein] + diphosphate. The enzyme catalyses L-tyrosyl-[protein] + ATP = O-(5'-adenylyl)-L-tyrosyl-[protein] + diphosphate. The catalysed reaction is L-histidyl-[protein] + UTP = N(tele)-(5'-uridylyl)-L-histidyl-[protein] + diphosphate. It catalyses the reaction L-seryl-[protein] + UTP = O-(5'-uridylyl)-L-seryl-[protein] + diphosphate. It carries out the reaction L-tyrosyl-[protein] + UTP = O-(5'-uridylyl)-L-tyrosyl-[protein] + diphosphate. Functionally, nucleotidyltransferase involved in the post-translational modification of proteins. It can catalyze the addition of adenosine monophosphate (AMP) or uridine monophosphate (UMP) to a protein, resulting in modifications known as AMPylation and UMPylation. The polypeptide is Protein nucleotidyltransferase YdiU (Burkholderia cenocepacia (strain HI2424)).